The following is a 176-amino-acid chain: Transmembrane protein 238 (176 aa).

A disordered region spans residues 1–22; the sequence is MAAAPAVCASQGSPPGAPSAPA. Over 1 to 36 the chain is Cytoplasmic; it reads MAAAPAVCASQGSPPGAPSAPAAAPAPAAGLGRCRM. Low complexity predominate over residues 9–22; the sequence is ASQGSPPGAPSAPA. A helical transmembrane segment spans residues 37–57; that stretch reads ALLLAVALDVAGMAALLTGVF. The Extracellular portion of the chain corresponds to 58-69; the sequence is AQLQVRGRDFGD. A helical membrane pass occupies residues 70-90; sequence LLIYSGALLVFLSLLGWILWY. Residues 91 to 176 lie on the Cytoplasmic side of the membrane; the sequence is TGNIEISRQE…GPGAAGAGSE (86 aa). Over residues 124–137 the composition is skewed to low complexity; sequence SAPAAAGQRPAPGS. Positions 124–157 are disordered; that stretch reads SAPAAAGQRPAPGSRRARRAARAPPPPAAGSRRV. At S175 the chain carries Phosphoserine.

It localises to the membrane. In Homo sapiens (Human), this protein is Transmembrane protein 238 (TMEM238).